Here is a 472-residue protein sequence, read N- to C-terminus: Putative diacyglycerol O-acyltransferase MT3172 (472 aa).

Residue histidine 139 is the Proton acceptor of the active site. The segment at 217–238 is disordered; sequence DRRVPPTFDRSAPPGPFQRGLS.

It belongs to the long-chain O-acyltransferase family.

The enzyme catalyses an acyl-CoA + a 1,2-diacyl-sn-glycerol = a triacyl-sn-glycerol + CoA. Its pathway is glycerolipid metabolism; triacylglycerol biosynthesis. In Mycobacterium tuberculosis (strain CDC 1551 / Oshkosh), this protein is Putative diacyglycerol O-acyltransferase MT3172.